The primary structure comprises 401 residues: Formate-dependent phosphoribosylglycinamide formyltransferase (401 aa).

Residues 22–23 and Glu-82 each bind N(1)-(5-phospho-beta-D-ribosyl)glycinamide; that span reads EL. Residues Arg-115, Lys-157, 162 to 167, 197 to 200, and Glu-205 each bind ATP; these read SSGKGQ and EGFI. The region spanning 120–315 is the ATP-grasp domain; that stretch reads RLAAESLGLP…EFELHARAIL (196 aa). Residues Glu-274 and Glu-286 each contribute to the Mg(2+) site. N(1)-(5-phospho-beta-D-ribosyl)glycinamide contacts are provided by residues Asp-293, Lys-362, and 369-370; that span reads RR.

The protein belongs to the PurK/PurT family. In terms of assembly, homodimer.

The enzyme catalyses N(1)-(5-phospho-beta-D-ribosyl)glycinamide + formate + ATP = N(2)-formyl-N(1)-(5-phospho-beta-D-ribosyl)glycinamide + ADP + phosphate + H(+). It participates in purine metabolism; IMP biosynthesis via de novo pathway; N(2)-formyl-N(1)-(5-phospho-D-ribosyl)glycinamide from N(1)-(5-phospho-D-ribosyl)glycinamide (formate route): step 1/1. Functionally, involved in the de novo purine biosynthesis. Catalyzes the transfer of formate to 5-phospho-ribosyl-glycinamide (GAR), producing 5-phospho-ribosyl-N-formylglycinamide (FGAR). Formate is provided by PurU via hydrolysis of 10-formyl-tetrahydrofolate. The polypeptide is Formate-dependent phosphoribosylglycinamide formyltransferase (Cupriavidus necator (strain ATCC 17699 / DSM 428 / KCTC 22496 / NCIMB 10442 / H16 / Stanier 337) (Ralstonia eutropha)).